Consider the following 430-residue polypeptide: Histidine--tRNA ligase (430 aa).

It belongs to the class-II aminoacyl-tRNA synthetase family. In terms of assembly, homodimer.

It is found in the cytoplasm. The catalysed reaction is tRNA(His) + L-histidine + ATP = L-histidyl-tRNA(His) + AMP + diphosphate + H(+). The protein is Histidine--tRNA ligase of Lactococcus lactis subsp. cremoris (strain MG1363).